A 240-amino-acid polypeptide reads, in one-letter code: Methylthioribulose-1-phosphate dehydratase (240 aa).

C103 lines the substrate pocket. The Zn(2+) site is built by H121 and H123. Catalysis depends on E144, which acts as the Proton donor/acceptor. H200 contributes to the Zn(2+) binding site.

It belongs to the aldolase class II family. MtnB subfamily. The cofactor is Zn(2+).

It localises to the cytoplasm. The catalysed reaction is 5-(methylsulfanyl)-D-ribulose 1-phosphate = 5-methylsulfanyl-2,3-dioxopentyl phosphate + H2O. It participates in amino-acid biosynthesis; L-methionine biosynthesis via salvage pathway; L-methionine from S-methyl-5-thio-alpha-D-ribose 1-phosphate: step 2/6. Functionally, catalyzes the dehydration of methylthioribulose-1-phosphate (MTRu-1-P) into 2,3-diketo-5-methylthiopentyl-1-phosphate (DK-MTP-1-P). The sequence is that of Methylthioribulose-1-phosphate dehydratase from Komagataella phaffii (strain GS115 / ATCC 20864) (Yeast).